Consider the following 184-residue polypeptide: Adenine phosphoribosyltransferase (184 aa).

Belongs to the purine/pyrimidine phosphoribosyltransferase family. In terms of assembly, homodimer.

The protein resides in the cytoplasm. It catalyses the reaction AMP + diphosphate = 5-phospho-alpha-D-ribose 1-diphosphate + adenine. It functions in the pathway purine metabolism; AMP biosynthesis via salvage pathway; AMP from adenine: step 1/1. In terms of biological role, catalyzes a salvage reaction resulting in the formation of AMP, that is energically less costly than de novo synthesis. The chain is Adenine phosphoribosyltransferase from Shewanella putrefaciens (strain CN-32 / ATCC BAA-453).